The chain runs to 319 residues: Acetyl esterase (319 aa).

Residues 91–93 carry the Involved in the stabilization of the negatively charged intermediate by the formation of the oxyanion hole motif; the sequence is HGG. Active-site residues include S165, D262, and H292.

It belongs to the 'GDXG' lipolytic enzyme family. Homodimer. Interacts with MalT and MelA.

It localises to the cytoplasm. Its function is as follows. Displays esterase activity towards short chain fatty esters (acyl chain length of up to 8 carbons). Able to hydrolyze triacetylglycerol (triacetin) and tributyrylglycerol (tributyrin), but not trioleylglycerol (triolein) or cholesterol oleate. Negatively regulates MalT activity by antagonizing maltotriose binding. Inhibits MelA galactosidase activity. This is Acetyl esterase from Escherichia coli O8 (strain IAI1).